The following is a 441-amino-acid chain: Amino-acid acetyltransferase (441 aa).

Residues 295–434 (EQVRRATIND…QALYNYQRRS (140 aa)) form the N-acetyltransferase domain.

It belongs to the acetyltransferase family. ArgA subfamily. Homohexamer.

It is found in the cytoplasm. It carries out the reaction L-glutamate + acetyl-CoA = N-acetyl-L-glutamate + CoA + H(+). The protein operates within amino-acid biosynthesis; L-arginine biosynthesis; N(2)-acetyl-L-ornithine from L-glutamate: step 1/4. This Pectobacterium carotovorum subsp. carotovorum (strain PC1) protein is Amino-acid acetyltransferase.